The primary structure comprises 61 residues: uncharacterized protein (61 aa).

This is an uncharacterized protein from Escherichia coli (strain K12).